We begin with the raw amino-acid sequence, 243 residues long: UPF0688 protein C1orf174 (243 aa).

Disordered regions lie at residues 78–100 and 132–243; these read NDSA…AEGS and LAKT…DAEM. Positions 145-157 are enriched in low complexity; the sequence is SAGSGAEESNSSS. Residues serine 148 and serine 189 each carry the phosphoserine modification. A compositionally biased stretch (acidic residues) spans 233-243; it reads DDDDDDDDAEM.

This sequence belongs to the UPF0688 family.

The protein localises to the nucleus. In Homo sapiens (Human), this protein is UPF0688 protein C1orf174 (C1orf174).